The sequence spans 96 residues: UPF0358 protein Aflv_1873 (96 aa).

The protein belongs to the UPF0358 family.

The sequence is that of UPF0358 protein Aflv_1873 from Anoxybacillus flavithermus (strain DSM 21510 / WK1).